The primary structure comprises 563 residues: Coiled-coil domain-containing protein 63 (563 aa).

Residues 1 to 29 form a disordered region; it reads MSVLKKNRRKDSDTPQEPSEKAKEQQAEA. Positions 10–29 are enriched in basic and acidic residues; sequence KDSDTPQEPSEKAKEQQAEA. 3 coiled-coil regions span residues 18-201, 233-291, and 341-422; these read PSEK…QLQH, AMKD…AKKH, and TELN…KKIN.

Functionally, plays a role in spermiogenesis. Involved in the elongation of flagella and the formation of sperm heads. The chain is Coiled-coil domain-containing protein 63 from Homo sapiens (Human).